The primary structure comprises 312 residues: Acetaldehyde dehydrogenase (312 aa).

11–14 (SGNI) provides a ligand contact to NAD(+). The Acyl-thioester intermediate role is filled by cysteine 129. NAD(+) contacts are provided by residues 160 to 168 (SAGPGTRAN) and asparagine 287.

This sequence belongs to the acetaldehyde dehydrogenase family.

The enzyme catalyses acetaldehyde + NAD(+) + CoA = acetyl-CoA + NADH + H(+). The polypeptide is Acetaldehyde dehydrogenase (xylQ) (Sphingobium yanoikuyae (Sphingomonas yanoikuyae)).